Here is a 546-residue protein sequence, read N- to C-terminus: Probable sucrose-6-phosphate hydrolase (546 aa).

Residues 105 to 108 (LLND), Gln-124, 167 to 168 (FS), 228 to 229 (RD), and Glu-283 each bind substrate. Asp-108 is an active-site residue.

The protein belongs to the glycosyl hydrolase 32 family.

Its subcellular location is the cytoplasm. It carries out the reaction Hydrolysis of terminal non-reducing beta-D-fructofuranoside residues in beta-D-fructofuranosides.. The protein operates within glycan biosynthesis; sucrose metabolism. Functionally, enables the bacterium to metabolize sucrose as a sole carbon source. This chain is Probable sucrose-6-phosphate hydrolase, found in Vibrio cholerae.